We begin with the raw amino-acid sequence, 297 residues long: Polyhedral envelope protein (297 aa).

It belongs to the baculoviridae PE family.

It is found in the virion membrane. Major component of the polyhedra envelope. This Orgyia pseudotsugata (Douglas-fir tussock moth) protein is Polyhedral envelope protein.